The sequence spans 872 residues: Chaperone protein ClpB 2 (872 aa).

Residues 6–148 enclose the Clp R domain; the sequence is PNQFTEKAWE…KNIIKQVRGS (143 aa). 2 repeat regions span residues 9–73 and 85–148; these read FTEK…IQRQ and LGRS…VRGS. Positions 161–342 are NBD1; it reads QSLEKYGRDL…RRFQQVYVDQ (182 aa). Residue 208–215 participates in ATP binding; the sequence is GEPGVGKT. The interval 343-551 is linker; it reads PSVEDTISIL…IAEIISKWTG (209 aa). The stretch at 393–527 forms a coiled coil; that stretch reads IDLVDEAAAR…TERELSQTQG (135 aa). The tract at residues 561–772 is NBD2; it reads EKEKLLHLED…RIDEVIIFHS (212 aa). 611–618 contributes to the ATP binding site; sequence GPTGVGKT. Residues 773-872 are C-terminal; that stretch reads LDKKELRQIV…SRLPVEVFSS (100 aa).

This sequence belongs to the ClpA/ClpB family. In terms of assembly, homohexamer. The oligomerization is ATP-dependent.

The protein resides in the cytoplasm. Part of a stress-induced multi-chaperone system, it is involved in the recovery of the cell from heat-induced damage, in cooperation with DnaK, DnaJ and GrpE. Acts before DnaK, in the processing of protein aggregates. Protein binding stimulates the ATPase activity; ATP hydrolysis unfolds the denatured protein aggregates, which probably helps expose new hydrophobic binding sites on the surface of ClpB-bound aggregates, contributing to the solubilization and refolding of denatured protein aggregates by DnaK. This is Chaperone protein ClpB 2 (clpB2) from Nostoc sp. (strain PCC 7120 / SAG 25.82 / UTEX 2576).